A 110-amino-acid chain; its full sequence is QVRPFPDVYQRSACQARETLVSILQEYPDEISDIFRPSCVAVLRCSGCCTDESLKCTPVGKHTVDMQIMRVNPRTQSSKMEVMKFTEHTACECRPRRKQGEPDGPKEKPR.

Position 1 is a pyrrolidone carboxylic acid (glutamine 1). 3 disulfide bridges follow: cysteine 14–cysteine 56, cysteine 45–cysteine 91, and cysteine 49–cysteine 93.

In terms of assembly, homodimer; disulfide-linked. Interacts with high affinity with KDR/VEGFR-2, and with a lower affinity with neuropilin-1 (NRP1) and neuropilin-2 (NRP2). Expressed by the venom gland.

The protein resides in the secreted. Snake venom VEGFs may contribute to venom dispersion and prey subjugation by inducing vascular permeability and hypotension. This protein increases vascular permeability and angiogenesis probably through VEGF receptor (KDR/VEGFR-2) signaling. Induces DNA synthesis in human umbilical vein endothelial cells, and promotes mouse embryonic stem cell proliferation and differentiation. It may also induce a drastic hypotensive effect after intravenous injection. The hypotension is mediated by nitric oxide (NO), which is produced by VEGF-activated endothelium NO synthase. This is Snake venom vascular endothelial growth factor toxin ICPP from Macrovipera lebetinus (Levantine viper).